The following is a 363-amino-acid chain: uncharacterized protein (363 aa).

An N-terminal signal peptide occupies residues methionine 1 to alanine 20.

It belongs to the fimbrial protein family.

It is found in the fimbrium. Part of the yraHIJK fimbrial operon. Could contribute to adhesion to various surfaces in specific environmental niches. Increases adhesion to eukaryotic T24 bladder epithelial cells in the absence of fim operon. This is an uncharacterized protein from Escherichia coli (strain K12).